The following is a 147-amino-acid chain: Myoglobin (147 aa).

Residues 2–141 (ADFDMVLKCW…IIADMEADYK (140 aa)) form the Globin domain. Position 60 (His60) interacts with nitrite. His60 contacts O2. His89 provides a ligand contact to heme b.

Belongs to the globin family. Monomeric.

It localises to the cytoplasm. The protein resides in the sarcoplasm. The enzyme catalyses Fe(III)-heme b-[protein] + nitric oxide + H2O = Fe(II)-heme b-[protein] + nitrite + 2 H(+). It carries out the reaction H2O2 + AH2 = A + 2 H2O. Its function is as follows. Monomeric heme protein which primary function is to store oxygen and facilitate its diffusion within muscle tissues. Reversibly binds oxygen through a pentacoordinated heme iron and enables its timely and efficient release as needed during periods of heightened demand. Depending on the oxidative conditions of tissues and cells, and in addition to its ability to bind oxygen, it also has a nitrite reductase activity whereby it regulates the production of bioactive nitric oxide. Under stress conditions, like hypoxia and anoxia, it also protects cells against reactive oxygen species thanks to its pseudoperoxidase activity. This chain is Myoglobin (mb), found in Pseudochaenichthys georgianus (South Georgia icefish).